Reading from the N-terminus, the 620-residue chain is Somatic embryogenesis receptor kinase 4 (620 aa).

Positions 1–33 (MTSSKMEQRSLLCFLYLLLLFNFTLRVAGNAEG) are cleaved as a signal peptide. The Extracellular portion of the chain corresponds to 34–234 (DALTQLKNSL…GGQMTAAIAG (201 aa)). LRR repeat units lie at residues 100–122 (NLQYLELYSNNITGEIPEELGDL), 124–146 (ELVSLDLYANSISGPIPSSLGKL), 148–170 (KLRFLRLNNNSLSGEIPMTLTSV), 171–193 (QLQVLDISNNRLSGDIPVNGSFS), and 194–215 (LFTPISFANNSLTDLPEPPPTS). N-linked (GlcNAc...) asparagine glycosylation is present at Asn110. Residues Asn156, Asn189, and Asn202 are each glycosylated (N-linked (GlcNAc...) asparagine). The interval 205 to 227 (LTDLPEPPPTSTSPTPPPPSGGQ) is disordered. A compositionally biased stretch (pro residues) spans 209–224 (PEPPPTSTSPTPPPPS). A helical membrane pass occupies residues 235–255 (GVAAGAALLFAVPAIAFAWWL). The Cytoplasmic portion of the chain corresponds to 256–620 (RRKPQDHFFD…IENDYPSGPR (365 aa)). Phosphothreonine is present on Thr291. The Protein kinase domain occupies 294 to 591 (FSNKNVLGRG…KEEMPIHDFN (298 aa)). Ser295 bears the Phosphoserine mark. Residues 300-308 (LGRGGFGKV) and Lys322 each bind ATP. Residues Ser375 and Ser378 each carry the phosphoserine modification. Catalysis depends on Asp421, which acts as the Proton acceptor. Residues Thr454, Thr455, and Thr460 each carry the phosphothreonine modification. A Phosphotyrosine modification is found at Tyr468. Residue Ser470 is modified to Phosphoserine. At Thr471 the chain carries Phosphothreonine. The residue at position 475 (Ser475) is a Phosphoserine. Position 551 is a phosphothreonine (Thr551).

It belongs to the protein kinase superfamily. Ser/Thr protein kinase family. As to quaternary structure, interacts with the EF-Tu receptor EFR and FLS2 in a specific ligand-induced manner. Interacts with TMK4/BARK1. Interacts with ERECTA in a EPF2-induced manner. Interacts with ERL1 in a EPF1-induced manner. Interacts with TMM. Forms a complex with MIK2 in response to SCOOP12 perception. In terms of processing, autophosphorylated on Thr and Tyr residues.

It is found in the cell membrane. It catalyses the reaction L-seryl-[protein] + ATP = O-phospho-L-seryl-[protein] + ADP + H(+). It carries out the reaction L-threonyl-[protein] + ATP = O-phospho-L-threonyl-[protein] + ADP + H(+). The enzyme catalyses L-tyrosyl-[protein] + ATP = O-phospho-L-tyrosyl-[protein] + ADP + H(+). Its function is as follows. Dual specificity kinase acting on both serine/threonine- and tyrosine-containing substrates. Positively regulates the BR-dependent plant growth pathway and negatively regulates the BR-independent cell-death pathway. Required during SCOOP small peptides (e.g. SCOOP10 and SCOOP12) perception and signaling; associates with MIK2 as a coreceptor upon MIK2 perception of SCOOP peptides, and relays the signaling through the activation of receptor-like cytosolic kinases (RLCKs) BIK1 and PBL1. The protein is Somatic embryogenesis receptor kinase 4 of Arabidopsis thaliana (Mouse-ear cress).